A 342-amino-acid chain; its full sequence is S-adenosylmethionine:tRNA ribosyltransferase-isomerase (342 aa).

Belongs to the QueA family. In terms of assembly, monomer.

Its subcellular location is the cytoplasm. It catalyses the reaction 7-aminomethyl-7-carbaguanosine(34) in tRNA + S-adenosyl-L-methionine = epoxyqueuosine(34) in tRNA + adenine + L-methionine + 2 H(+). It participates in tRNA modification; tRNA-queuosine biosynthesis. Transfers and isomerizes the ribose moiety from AdoMet to the 7-aminomethyl group of 7-deazaguanine (preQ1-tRNA) to give epoxyqueuosine (oQ-tRNA). The sequence is that of S-adenosylmethionine:tRNA ribosyltransferase-isomerase from Campylobacter jejuni (strain RM1221).